The chain runs to 47 residues: Putative heat shock protein HSP90 (47 aa).

Arg-47 serves as a coordination point for ATP.

It belongs to the heat shock protein 90 family. Homodimer.

The protein localises to the cytoplasm. Functionally, putative molecular chaperone that may promote the maturation, structural maintenance and proper regulation of specific target proteins. The chain is Putative heat shock protein HSP90 from Populus euphratica (Euphrates poplar).